The chain runs to 277 residues: Putative glucose-6-phosphate/phosphate-translocator-like protein 1 (277 aa).

5 consecutive transmembrane segments (helical) span residues valine 8–leucine 28, leucine 46–valine 66, methionine 124–phenylalanine 143, valine 153–phenylalanine 173, and proline 230–serine 250.

Belongs to the TPT transporter family. GPT (TC 2.A.7.9) subfamily.

It is found in the membrane. The polypeptide is Putative glucose-6-phosphate/phosphate-translocator-like protein 1 (Arabidopsis thaliana (Mouse-ear cress)).